The following is a 211-amino-acid chain: Imidazole glycerol phosphate synthase subunit HisH (211 aa).

In terms of domain architecture, Glutamine amidotransferase type-1 spans 3-211 (VVAVIDYEMG…VSQVREKIAA (209 aa)). Cys81 acts as the Nucleophile in catalysis. Active-site residues include His186 and Glu188.

As to quaternary structure, heterodimer of HisH and HisF.

The protein localises to the cytoplasm. The enzyme catalyses 5-[(5-phospho-1-deoxy-D-ribulos-1-ylimino)methylamino]-1-(5-phospho-beta-D-ribosyl)imidazole-4-carboxamide + L-glutamine = D-erythro-1-(imidazol-4-yl)glycerol 3-phosphate + 5-amino-1-(5-phospho-beta-D-ribosyl)imidazole-4-carboxamide + L-glutamate + H(+). It carries out the reaction L-glutamine + H2O = L-glutamate + NH4(+). It functions in the pathway amino-acid biosynthesis; L-histidine biosynthesis; L-histidine from 5-phospho-alpha-D-ribose 1-diphosphate: step 5/9. IGPS catalyzes the conversion of PRFAR and glutamine to IGP, AICAR and glutamate. The HisH subunit catalyzes the hydrolysis of glutamine to glutamate and ammonia as part of the synthesis of IGP and AICAR. The resulting ammonia molecule is channeled to the active site of HisF. This chain is Imidazole glycerol phosphate synthase subunit HisH, found in Nostoc sp. (strain PCC 7120 / SAG 25.82 / UTEX 2576).